The following is a 217-amino-acid chain: Pre-mRNA-splicing factor sap62 (217 aa).

The Matrin-type zinc-finger motif lies at 54–84 (FECRLCLTTHANENSYLTHTQGKKHQTNLAR).

Belongs to the SF3A2 family. As to quaternary structure, belongs to the 40S cdc5-associated complex (or cwf complex), a spliceosome sub-complex reminiscent of a late-stage spliceosome composed of the U2, U5 and U6 snRNAs and at least brr2, cdc5, cwf2/prp3, cwf3/syf1, cwf4/syf3, cwf5/ecm2, spp42/cwf6, cwf7/spf27, cwf8, cwf9, cwf10, cwf11, cwf12, prp45/cwf13, cwf14, cwf15, cwf16, cwf17, cwf18, cwf19, cwf20, cwf21, cwf22, cwf23, cwf24, cwf25, cwf26, cyp7/cwf27, cwf28, cwf29/ist3, lea1, msl1, prp5/cwf1, prp10, prp12/sap130, prp17, prp22, sap61, sap62, sap114, sap145, slu7, smb1, smd1, smd3, smf1, smg1 and syf2.

Its subcellular location is the nucleus. It is found in the cytoplasm. Functionally, involved in mRNA splicing where it associates with cdc5 and the other cwf proteins as part of the spliceosome. The sequence is that of Pre-mRNA-splicing factor sap62 (sap62) from Schizosaccharomyces pombe (strain 972 / ATCC 24843) (Fission yeast).